The chain runs to 597 residues: Fructan 1-exohydrolase (597 aa).

The first 15 residues, methionine 1–glycine 15, serve as a signal peptide directing secretion. The active site involves aspartate 76. N-linked (GlcNAc...) asparagine glycans are attached at residues asparagine 169, asparagine 237, and asparagine 249. A disulfide bridge links cysteine 447 with cysteine 493. N-linked (GlcNAc...) asparagine glycosylation is present at asparagine 568.

Belongs to the glycosyl hydrolase 32 family.

It catalyses the reaction Hydrolysis of terminal, non-reducing (2-&gt;1)-linked beta-D-fructofuranose residues in fructans.. Its activity is regulated as follows. Inhibited by sucrose. Its function is as follows. Hydrolyzes inulin-type beta-(2,1)-fructans. May play a role as a beta-(2,1)-trimmer during graminan biosynthesis. The polypeptide is Fructan 1-exohydrolase (Triticum urartu (Red wild einkorn)).